Here is a 334-residue protein sequence, read N- to C-terminus: GTP 3',8-cyclase (334 aa).

Residues 11-236 (GFNRKIDYLR…ESTESSQGPA (226 aa)) form the Radical SAM core domain. GTP is bound at residue Arg-20. Residues Cys-27 and Cys-31 each coordinate [4Fe-4S] cluster. S-adenosyl-L-methionine is bound at residue Tyr-33. Cys-34 is a [4Fe-4S] cluster binding site. Residue Arg-69 participates in GTP binding. An S-adenosyl-L-methionine-binding site is contributed by Gly-73. Thr-100 provides a ligand contact to GTP. Position 124 (Ser-124) interacts with S-adenosyl-L-methionine. Lys-161 contacts GTP. Met-195 provides a ligand contact to S-adenosyl-L-methionine. Cys-260 and Cys-263 together coordinate [4Fe-4S] cluster. A GTP-binding site is contributed by 265–267 (RVR). Cys-277 serves as a coordination point for [4Fe-4S] cluster.

Belongs to the radical SAM superfamily. MoaA family. In terms of assembly, monomer and homodimer. The cofactor is [4Fe-4S] cluster.

It catalyses the reaction GTP + AH2 + S-adenosyl-L-methionine = (8S)-3',8-cyclo-7,8-dihydroguanosine 5'-triphosphate + 5'-deoxyadenosine + L-methionine + A + H(+). Its pathway is cofactor biosynthesis; molybdopterin biosynthesis. Functionally, catalyzes the cyclization of GTP to (8S)-3',8-cyclo-7,8-dihydroguanosine 5'-triphosphate. In Pseudomonas putida (strain W619), this protein is GTP 3',8-cyclase.